The sequence spans 146 residues: Hemoglobin subunit beta (146 aa).

T1 bears the Blocked amino end (Thr) mark. The Globin domain maps to 2–146; the sequence is HWTAEERHYI…VAHALTLQYH (145 aa). Heme b contacts are provided by H63 and H92.

Belongs to the globin family. In terms of assembly, heterotetramer of two alpha chains and two beta chains. As to expression, red blood cells.

Functionally, involved in oxygen transport from the lung to the various peripheral tissues. This Caretta caretta (Loggerhead sea turtle) protein is Hemoglobin subunit beta (HBB).